The following is a 258-amino-acid chain: MGVERIQAAFENGKKAFIPYVMGGDGGLEILKERIRFLDEAGASIVEIGIPFSDPVADGPTIQRAGKRALDSGVTVKGIFQALIEARKEVQIPFVLMTYLNPVLAFGKERFIENCMEAGVDGIIVPDLPYEEQDIIAPLLREANIALIPLVTVTSPIERIKKITSESEGFVYAVTVAGVTGVRQNFKDEIHSYLEKVKSHTHLPVVAGFGISTKEHVEEMVTICDGVVVGSKVIELLENEKREEICEFIQATKQKEEA.

Catalysis depends on proton acceptor residues E47 and D58.

It belongs to the TrpA family. Tetramer of two alpha and two beta chains.

It carries out the reaction (1S,2R)-1-C-(indol-3-yl)glycerol 3-phosphate + L-serine = D-glyceraldehyde 3-phosphate + L-tryptophan + H2O. Its pathway is amino-acid biosynthesis; L-tryptophan biosynthesis; L-tryptophan from chorismate: step 5/5. Functionally, the alpha subunit is responsible for the aldol cleavage of indoleglycerol phosphate to indole and glyceraldehyde 3-phosphate. The sequence is that of Tryptophan synthase alpha chain from Bacillus cereus (strain ZK / E33L).